A 222-amino-acid polypeptide reads, in one-letter code: Cytochrome b6-f complex iron-sulfur subunit, chloroplastic (222 aa).

Residues 1 to 49 (MASTALSTASNPTQLCRTRASSLCKPVKGLGFGRERIPRNITCMAGSIS) constitute a chloroplast transit peptide. A helical transmembrane segment spans residues 66 to 86 (LLGAISLPTFGMLVPYGSFLV). The Rieske domain occupies 109–205 (VEDWLKTHGP…ADVDDGKVVF (97 aa)). [2Fe-2S] cluster-binding residues include Cys151, His153, Cys169, and His172. A disulfide bridge links Cys156 with Cys171.

This sequence belongs to the Rieske iron-sulfur protein family. In terms of assembly, the 4 large subunits of the cytochrome b6-f complex are cytochrome b6, subunit IV (17 kDa polypeptide, petD), cytochrome f and the Rieske protein, while the 4 small subunits are petG, petL, petM and petN. The complex functions as a dimer. [2Fe-2S] cluster serves as cofactor.

The protein resides in the plastid. It localises to the chloroplast thylakoid membrane. It catalyses the reaction 2 oxidized [plastocyanin] + a plastoquinol + 2 H(+)(in) = 2 reduced [plastocyanin] + a plastoquinone + 4 H(+)(out). Functionally, component of the cytochrome b6-f complex, which mediates electron transfer between photosystem II (PSII) and photosystem I (PSI), cyclic electron flow around PSI, and state transitions. The polypeptide is Cytochrome b6-f complex iron-sulfur subunit, chloroplastic (petC) (Triticum aestivum (Wheat)).